The primary structure comprises 253 residues: DNA repair protein RecO (253 aa).

Belongs to the RecO family.

Functionally, involved in DNA repair and RecF pathway recombination. The protein is DNA repair protein RecO of Dehalococcoides mccartyi (strain ATCC BAA-2100 / JCM 16839 / KCTC 5957 / BAV1).